The chain runs to 209 residues: Ribosomal RNA large subunit methyltransferase E (209 aa).

S-adenosyl-L-methionine contacts are provided by G63, W65, D83, D99, and D124. The active-site Proton acceptor is the K164.

The protein belongs to the class I-like SAM-binding methyltransferase superfamily. RNA methyltransferase RlmE family.

It localises to the cytoplasm. It carries out the reaction uridine(2552) in 23S rRNA + S-adenosyl-L-methionine = 2'-O-methyluridine(2552) in 23S rRNA + S-adenosyl-L-homocysteine + H(+). Functionally, specifically methylates the uridine in position 2552 of 23S rRNA at the 2'-O position of the ribose in the fully assembled 50S ribosomal subunit. The sequence is that of Ribosomal RNA large subunit methyltransferase E from Photorhabdus laumondii subsp. laumondii (strain DSM 15139 / CIP 105565 / TT01) (Photorhabdus luminescens subsp. laumondii).